A 409-amino-acid chain; its full sequence is Arginine deiminase (409 aa).

Cys-399 serves as the catalytic Amidino-cysteine intermediate.

It belongs to the arginine deiminase family.

Its subcellular location is the cytoplasm. It carries out the reaction L-arginine + H2O = L-citrulline + NH4(+). The protein operates within amino-acid degradation; L-arginine degradation via ADI pathway; carbamoyl phosphate from L-arginine: step 1/2. The polypeptide is Arginine deiminase (Streptococcus pneumoniae (strain P1031)).